The following is a 449-amino-acid chain: UDP-N-acetylmuramoylalanine--D-glutamate ligase (449 aa).

118-124 (GTNGKTT) lines the ATP pocket.

This sequence belongs to the MurCDEF family.

It localises to the cytoplasm. The enzyme catalyses UDP-N-acetyl-alpha-D-muramoyl-L-alanine + D-glutamate + ATP = UDP-N-acetyl-alpha-D-muramoyl-L-alanyl-D-glutamate + ADP + phosphate + H(+). It participates in cell wall biogenesis; peptidoglycan biosynthesis. Cell wall formation. Catalyzes the addition of glutamate to the nucleotide precursor UDP-N-acetylmuramoyl-L-alanine (UMA). This Staphylococcus aureus (strain MRSA252) protein is UDP-N-acetylmuramoylalanine--D-glutamate ligase.